Reading from the N-terminus, the 389-residue chain is Curcumin synthase 1 (389 aa).

Cysteine 164 is an active-site residue.

This sequence belongs to the thiolase-like superfamily. Chalcone/stilbene synthases family. As to quaternary structure, homodimer. In terms of tissue distribution, expressed in both the leaf and rhizome, with higher expression in the rhizome.

It carries out the reaction (E)-feruloylacetyl-CoA + (E)-feruloyl-CoA + H2O = curcumin + CO2 + 2 CoA. It participates in secondary metabolite biosynthesis; flavonoid biosynthesis. Catalyzes the synthesis of curcumin by condensing feruloyl-CoA with a diketide-CoA in the curcuminoid biosynthesis. In Curcuma longa (Turmeric), this protein is Curcumin synthase 1 (CURS1).